The chain runs to 513 residues: E3 ubiquitin-protein ligase RNF25 (513 aa).

The RWD domain maps to 9-117 (SEIEVLQSIY…ERAKEILTDS (109 aa)). Residues Cys-124, Cys-127, Cys-142, His-144, His-147, Cys-150, Cys-187, and Cys-190 each coordinate Zn(2+). The RING-type; atypical zinc-finger motif lies at 124 to 191 (CVICLYDFKE…ELAVVCPVCR (68 aa)). Residues 261 to 513 (NLSDTPGMTD…EKEFRKEGVL (253 aa)) are disordered. Over residues 271–297 (SSGAESSQSLPSSSPDSTSTTQTSQNQ) the composition is skewed to low complexity. Composition is skewed to polar residues over residues 345 to 397 (SDKI…QDML) and 406 to 423 (EVSQ…QTIL). The span at 426-440 (GHPEREHVGRGDKRG) shows a compositional bias: basic and acidic residues. A compositionally biased stretch (gly residues) spans 482–498 (AGRGHRGGGAYRGGGRG). Basic and acidic residues predominate over residues 501 to 513 (QRVEKEFRKEGVL).

It belongs to the RNF25 family.

Its subcellular location is the cytoplasm. The catalysed reaction is S-ubiquitinyl-[E2 ubiquitin-conjugating enzyme]-L-cysteine + [acceptor protein]-L-lysine = [E2 ubiquitin-conjugating enzyme]-L-cysteine + N(6)-ubiquitinyl-[acceptor protein]-L-lysine.. The protein operates within protein modification; protein ubiquitination. Functionally, E3 ubiquitin-protein ligase that plays a key role in the RNF14-RNF25 translation quality control pathway, a pathway that takes place when a ribosome has stalled during translation, and which promotes ubiquitination and degradation of translation factors on stalled ribosomes. May also acts as a positive regulator of the Wnt signaling. The polypeptide is E3 ubiquitin-protein ligase RNF25 (Danio rerio (Zebrafish)).